Consider the following 265-residue polypeptide: Protein N-terminal and lysine N-methyltransferase EFM7 (265 aa).

S-adenosyl-L-methionine-binding positions include Trp-55, 81–83, Asp-103, Trp-141, and Ala-169; that span reads GAA.

It belongs to the class I-like SAM-binding methyltransferase superfamily. EFM7 family.

Its subcellular location is the cytoplasm. Its function is as follows. S-adenosyl-L-methionine-dependent protein methyltransferase that trimethylates the N-terminal glycine 'Gly-2' of elongation factor 1-alpha, before also catalyzing the mono- and dimethylation of 'Lys-3'. This is Protein N-terminal and lysine N-methyltransferase EFM7 from Gibberella zeae (strain ATCC MYA-4620 / CBS 123657 / FGSC 9075 / NRRL 31084 / PH-1) (Wheat head blight fungus).